A 448-amino-acid polypeptide reads, in one-letter code: MKKDKTERTKQSWRKAQNAPSLSEVNNSVAIPKNAKFFRKLFAFMGPGALIAVGYVDPGNWATSIAGGSEFGYTLLSVILISNILAVLLQSLASKLGIVTGRDLAQASSDHFSKPFGFVLWILAELAIIATDIAEVIGSAIALNLLFGIPLIWGVCITALDIFLVLFLQHKGFRYIEVIVITLMVTILVCFGAEMVMSHPDMQAIAKGFIPQSEIVTNPAMLYIALGILGATVMPHNLYLHSSIVQTRQYARTKEGKKEAIRFSFIDSTFSLTIALLINASILILAAAAFYTTGQHNVAGIEDAYKLLNPTLGSSIASTVFAVALLASGQNSTLTGTLAGQIVMEGFLNIRLKPVVRRLLTRVLAIVPAVIITALYGANGINELLIFSQVILSMQLSFAVIPLVMFTSDKQKMGEFVNPTWLKIISWAVAIFIAVLNIYLLFYTLTSL.

A compositionally biased stretch (basic and acidic residues) spans methionine 1–lysine 10. The segment at methionine 1–proline 20 is disordered. The next 11 membrane-spanning stretches (helical) occupy residues leucine 41 to tryptophan 61, serine 69 to leucine 89, glycine 117 to isoleucine 137, phenylalanine 147 to phenylalanine 167, isoleucine 176 to valine 196, isoleucine 215 to proline 235, phenylalanine 270 to phenylalanine 290, leucine 307 to alanine 327, valine 363 to glutamate 383, leucine 384 to valine 404, and isoleucine 424 to threonine 444.

The protein belongs to the NRAMP family.

The protein localises to the cell membrane. Functionally, h(+)-stimulated, divalent metal cation uptake system. In Listeria monocytogenes serotype 4b (strain CLIP80459), this protein is Divalent metal cation transporter MntH.